Here is a 326-residue protein sequence, read N- to C-terminus: tRNA-modifying protein YgfZ (326 aa).

Folate-binding residues include Trp27 and Trp189.

This sequence belongs to the tRNA-modifying YgfZ family.

The protein localises to the cytoplasm. In terms of biological role, folate-binding protein involved in regulating the level of ATP-DnaA and in the modification of some tRNAs. It is probably a key factor in regulatory networks that act via tRNA modification, such as initiation of chromosomal replication. This Escherichia coli O127:H6 (strain E2348/69 / EPEC) protein is tRNA-modifying protein YgfZ.